The sequence spans 112 residues: Large ribosomal subunit protein uL22 (112 aa).

This sequence belongs to the universal ribosomal protein uL22 family. As to quaternary structure, part of the 50S ribosomal subunit.

Its function is as follows. This protein binds specifically to 23S rRNA; its binding is stimulated by other ribosomal proteins, e.g. L4, L17, and L20. It is important during the early stages of 50S assembly. It makes multiple contacts with different domains of the 23S rRNA in the assembled 50S subunit and ribosome. Functionally, the globular domain of the protein is located near the polypeptide exit tunnel on the outside of the subunit, while an extended beta-hairpin is found that lines the wall of the exit tunnel in the center of the 70S ribosome. The chain is Large ribosomal subunit protein uL22 from Sorangium cellulosum (strain So ce56) (Polyangium cellulosum (strain So ce56)).